Here is a 189-residue protein sequence, read N- to C-terminus: Tumor protein p53-inducible protein 11 (189 aa).

The Cytoplasmic segment spans residues 1–63; that stretch reads MAGKQPPPLM…FAVREPLGLR (63 aa). Ser-14 carries the post-translational modification Phosphoserine. Residues 64 to 84 form a helical membrane-spanning segment; that stretch reads VWQFLSAMLFSSVAIMALALP. At 85 to 108 the chain is on the extracellular side; the sequence is DQLYDAVFDGAEVTSKTPIRLYGG. A helical transmembrane segment spans residues 109–129; the sequence is ALLSISLIMWNALYTAEKVII. A topological domain (cytoplasmic) is located at residue Arg-130. Residues 131–151 traverse the membrane as a helical segment; the sequence is WTLLTEACYFGVQSLVVTATL. At 152–155 the chain is on the extracellular side; that stretch reads AETG. The helical transmembrane segment at 156–176 threads the bilayer; it reads LMSLGTVLLLASRLLFVIVSI. Residues 177 to 189 are Cytoplasmic-facing; sequence YYYYQVGRKPKKV.

It is found in the membrane. In Mus musculus (Mouse), this protein is Tumor protein p53-inducible protein 11 (Trp53i11).